The sequence spans 207 residues: tRNA (pseudouridine(54)-N(1))-methyltransferase (207 aa).

L137 is an S-adenosyl-L-methionine binding site.

Belongs to the methyltransferase superfamily. TrmY family. In terms of assembly, homodimer.

Its subcellular location is the cytoplasm. It catalyses the reaction pseudouridine(54) in tRNA + S-adenosyl-L-methionine = N(1)-methylpseudouridine(54) in tRNA + S-adenosyl-L-homocysteine + H(+). Specifically catalyzes the N1-methylation of pseudouridine at position 54 (Psi54) in tRNAs. This is tRNA (pseudouridine(54)-N(1))-methyltransferase from Halorubrum lacusprofundi (strain ATCC 49239 / DSM 5036 / JCM 8891 / ACAM 34).